Here is a 177-residue protein sequence, read N- to C-terminus: Large ribosomal subunit protein uL6 (177 aa).

The protein belongs to the universal ribosomal protein uL6 family. As to quaternary structure, part of the 50S ribosomal subunit.

Functionally, this protein binds to the 23S rRNA, and is important in its secondary structure. It is located near the subunit interface in the base of the L7/L12 stalk, and near the tRNA binding site of the peptidyltransferase center. The polypeptide is Large ribosomal subunit protein uL6 (Rickettsia africae (strain ESF-5)).